A 944-amino-acid chain; its full sequence is Translation initiation factor IF-2 (944 aa).

A disordered region spans residues I61–I281. The segment covering T132–S150 has biased composition (polar residues). A compositionally biased stretch (basic and acidic residues) spans Q151–L169. Residues S175–N185 show a composition bias toward low complexity. Over residues A186–H203 the composition is skewed to basic and acidic residues. The span at E204–I215 shows a compositional bias: basic residues. The segment covering E244–K259 has biased composition (basic and acidic residues). The region spanning E443–K612 is the tr-type G domain. Residues G452–T459 form a G1 region. GTP is bound at residue G452–T459. Positions G477 to H481 are G2. Residues D498 to G501 form a G3 region. GTP contacts are provided by residues D498–H502 and N552–D555. Positions N552–D555 are G4. The tract at residues S588 to K590 is G5.

Belongs to the TRAFAC class translation factor GTPase superfamily. Classic translation factor GTPase family. IF-2 subfamily.

The protein resides in the cytoplasm. In terms of biological role, one of the essential components for the initiation of protein synthesis. Protects formylmethionyl-tRNA from spontaneous hydrolysis and promotes its binding to the 30S ribosomal subunits. Also involved in the hydrolysis of GTP during the formation of the 70S ribosomal complex. This Helicobacter pylori (strain HPAG1) protein is Translation initiation factor IF-2.